The chain runs to 704 residues: Polyribonucleotide nucleotidyltransferase (704 aa).

Residues aspartate 487 and aspartate 493 each contribute to the Mg(2+) site. In terms of domain architecture, KH spans 554–613 (PRLLTIKIHPDKIREVIGKGGSTIQAITKETGTQIDIQDDGTIIIASVNAIAAQAAKSRI). One can recognise an S1 motif domain in the interval 623–691 (GRIYEGKVAK…KQGRIRLSIK (69 aa)).

This sequence belongs to the polyribonucleotide nucleotidyltransferase family. Component of the RNA degradosome, which is a multiprotein complex involved in RNA processing and mRNA degradation. Requires Mg(2+) as cofactor.

It is found in the cytoplasm. It catalyses the reaction RNA(n+1) + phosphate = RNA(n) + a ribonucleoside 5'-diphosphate. Its function is as follows. Involved in mRNA degradation. Catalyzes the phosphorolysis of single-stranded polyribonucleotides processively in the 3'- to 5'-direction. This Xanthomonas axonopodis pv. citri (strain 306) protein is Polyribonucleotide nucleotidyltransferase.